A 470-amino-acid polypeptide reads, in one-letter code: Ribosomal protein uS12 methylthiotransferase RimO (470 aa).

A disordered region spans residues 1–27 (MPCQAPHSDSNVKNPSEATNQKDHSPR). Polar residues predominate over residues 7 to 19 (HSDSNVKNPSEAT). Residues 26-141 (PRVGFVSLGC…VMQAVHTHLP (116 aa)) enclose the MTTase N-terminal domain. The [4Fe-4S] cluster site is built by Cys35, Cys71, Cys100, Cys172, Cys176, and Cys179. Residues 158–399 (LTPKHYAYLK…MEVAEAVSAR (242 aa)) form the Radical SAM core domain. A TRAM domain is found at 402–470 (QRKVGQTLRV…ADGHDLWGEV (69 aa)).

The protein belongs to the methylthiotransferase family. RimO subfamily. Requires [4Fe-4S] cluster as cofactor.

It is found in the cytoplasm. It carries out the reaction L-aspartate(89)-[ribosomal protein uS12]-hydrogen + (sulfur carrier)-SH + AH2 + 2 S-adenosyl-L-methionine = 3-methylsulfanyl-L-aspartate(89)-[ribosomal protein uS12]-hydrogen + (sulfur carrier)-H + 5'-deoxyadenosine + L-methionine + A + S-adenosyl-L-homocysteine + 2 H(+). In terms of biological role, catalyzes the methylthiolation of an aspartic acid residue of ribosomal protein uS12. This chain is Ribosomal protein uS12 methylthiotransferase RimO, found in Cupriavidus taiwanensis (strain DSM 17343 / BCRC 17206 / CCUG 44338 / CIP 107171 / LMG 19424 / R1) (Ralstonia taiwanensis (strain LMG 19424)).